A 471-amino-acid polypeptide reads, in one-letter code: Probable ribonuclease FAU-1 (471 aa).

It belongs to the FAU-1 family.

Probable RNase involved in rRNA stability through maturation and/or degradation of precursor rRNAs. Preferentially cleaves UA sequences in the 5' precursor region of 5S rRNA. Binds to RNA in loop regions with AU-rich sequences. This chain is Probable ribonuclease FAU-1, found in Thermococcus kodakarensis (strain ATCC BAA-918 / JCM 12380 / KOD1) (Pyrococcus kodakaraensis (strain KOD1)).